The following is a 426-amino-acid chain: 3-isopropylmalate dehydratase large subunit (426 aa).

Residues cysteine 307, cysteine 367, and cysteine 370 each coordinate [4Fe-4S] cluster.

It belongs to the aconitase/IPM isomerase family. LeuC type 2 subfamily. As to quaternary structure, heterodimer of LeuC and LeuD. It depends on [4Fe-4S] cluster as a cofactor.

The enzyme catalyses (2R,3S)-3-isopropylmalate = (2S)-2-isopropylmalate. It participates in amino-acid biosynthesis; L-leucine biosynthesis; L-leucine from 3-methyl-2-oxobutanoate: step 2/4. Functionally, catalyzes the isomerization between 2-isopropylmalate and 3-isopropylmalate, via the formation of 2-isopropylmaleate. The chain is 3-isopropylmalate dehydratase large subunit from Aliarcobacter butzleri (strain RM4018) (Arcobacter butzleri).